The chain runs to 484 residues: Probable glycine dehydrogenase (decarboxylating) subunit 2 (484 aa).

K264 bears the N6-(pyridoxal phosphate)lysine mark.

The protein belongs to the GcvP family. C-terminal subunit subfamily. In terms of assembly, the glycine cleavage system is composed of four proteins: P, T, L and H. In this organism, the P 'protein' is a heterodimer of two subunits. Pyridoxal 5'-phosphate is required as a cofactor.

The catalysed reaction is N(6)-[(R)-lipoyl]-L-lysyl-[glycine-cleavage complex H protein] + glycine + H(+) = N(6)-[(R)-S(8)-aminomethyldihydrolipoyl]-L-lysyl-[glycine-cleavage complex H protein] + CO2. In terms of biological role, the glycine cleavage system catalyzes the degradation of glycine. The P protein binds the alpha-amino group of glycine through its pyridoxal phosphate cofactor; CO(2) is released and the remaining methylamine moiety is then transferred to the lipoamide cofactor of the H protein. This Legionella pneumophila (strain Paris) protein is Probable glycine dehydrogenase (decarboxylating) subunit 2.